The chain runs to 318 residues: Pantothenate kinase (318 aa).

96 to 103 (GSVAVGKS) provides a ligand contact to ATP.

It belongs to the prokaryotic pantothenate kinase family.

The protein localises to the cytoplasm. The enzyme catalyses (R)-pantothenate + ATP = (R)-4'-phosphopantothenate + ADP + H(+). It functions in the pathway cofactor biosynthesis; coenzyme A biosynthesis; CoA from (R)-pantothenate: step 1/5. This chain is Pantothenate kinase, found in Coxiella burnetii (strain CbuK_Q154) (Coxiella burnetii (strain Q154)).